A 213-amino-acid polypeptide reads, in one-letter code: Orotate phosphoribosyltransferase (213 aa).

Lysine 26 lines the 5-phospho-alpha-D-ribose 1-diphosphate pocket. 34–35 lines the orotate pocket; the sequence is FF. Residues 72–73, arginine 98, lysine 99, lysine 102, histidine 104, and 123–131 each bind 5-phospho-alpha-D-ribose 1-diphosphate; these read YK and DDVISAGTS. Orotate is bound by residues serine 127 and arginine 155.

This sequence belongs to the purine/pyrimidine phosphoribosyltransferase family. PyrE subfamily. As to quaternary structure, homodimer. Mg(2+) is required as a cofactor.

It catalyses the reaction orotidine 5'-phosphate + diphosphate = orotate + 5-phospho-alpha-D-ribose 1-diphosphate. The protein operates within pyrimidine metabolism; UMP biosynthesis via de novo pathway; UMP from orotate: step 1/2. In terms of biological role, catalyzes the transfer of a ribosyl phosphate group from 5-phosphoribose 1-diphosphate to orotate, leading to the formation of orotidine monophosphate (OMP). In Laribacter hongkongensis (strain HLHK9), this protein is Orotate phosphoribosyltransferase.